We begin with the raw amino-acid sequence, 324 residues long: Serine/threonine-protein phosphatase PP1 isozyme 8 (324 aa).

Positions 66, 68, 94, and 126 each coordinate Mn(2+). The Proton donor role is filled by H127. H175 and H250 together coordinate Mn(2+).

The protein belongs to the PPP phosphatase family. PP-1 subfamily. It depends on Mn(2+) as a cofactor. In terms of tissue distribution, expressed in roots, rosettes and flowers.

Its subcellular location is the nucleus. The protein localises to the cytoplasm. The catalysed reaction is O-phospho-L-seryl-[protein] + H2O = L-seryl-[protein] + phosphate. The enzyme catalyses O-phospho-L-threonyl-[protein] + H2O = L-threonyl-[protein] + phosphate. Its activity is regulated as follows. Phosphatase activity is strongly reduced by the protein phosphatase inhibitor 2 (I-2). Its function is as follows. Serine/threonine-protein phosphatase that possesses phosphatase activity toward para-nitrophenyl phosphate (pNPP) in vitro. This is Serine/threonine-protein phosphatase PP1 isozyme 8 from Arabidopsis thaliana (Mouse-ear cress).